Reading from the N-terminus, the 531-residue chain is CTP synthase (531 aa).

The amidoligase domain stretch occupies residues 1–267 (MTKYIFVTGG…DQIVCEHLRL (267 aa)). Position 13 (Ser-13) interacts with CTP. A UTP-binding site is contributed by Ser-13. 14–19 (SLGKGI) contributes to the ATP binding site. Tyr-54 provides a ligand contact to L-glutamine. ATP is bound at residue Asp-71. Positions 71 and 141 each coordinate Mg(2+). CTP contacts are provided by residues 148–150 (DIE), 188–193 (KTKPTQ), and Lys-224. UTP contacts are provided by residues 188–193 (KTKPTQ) and Lys-224. 240–242 (RDA) provides a ligand contact to ATP. The 240-residue stretch at 292–531 (KIALVGKYVE…REFVRASLKE (240 aa)) folds into the Glutamine amidotransferase type-1 domain. Gly-354 contributes to the L-glutamine binding site. The Nucleophile; for glutamine hydrolysis role is filled by Cys-381. Residues 382–385 (LGMQ), Glu-405, and Arg-462 contribute to the L-glutamine site. Active-site residues include His-507 and Glu-509.

This sequence belongs to the CTP synthase family. Homotetramer.

The enzyme catalyses UTP + L-glutamine + ATP + H2O = CTP + L-glutamate + ADP + phosphate + 2 H(+). It carries out the reaction L-glutamine + H2O = L-glutamate + NH4(+). It catalyses the reaction UTP + NH4(+) + ATP = CTP + ADP + phosphate + 2 H(+). It participates in pyrimidine metabolism; CTP biosynthesis via de novo pathway; CTP from UDP: step 2/2. With respect to regulation, allosterically activated by GTP, when glutamine is the substrate; GTP has no effect on the reaction when ammonia is the substrate. The allosteric effector GTP functions by stabilizing the protein conformation that binds the tetrahedral intermediate(s) formed during glutamine hydrolysis. Inhibited by the product CTP, via allosteric rather than competitive inhibition. Functionally, catalyzes the ATP-dependent amination of UTP to CTP with either L-glutamine or ammonia as the source of nitrogen. Regulates intracellular CTP levels through interactions with the four ribonucleotide triphosphates. The sequence is that of CTP synthase from Geobacillus kaustophilus (strain HTA426).